Consider the following 816-residue polypeptide: Molybdenum cofactor sulfurase (816 aa).

Lysine 273 carries the N6-(pyridoxal phosphate)lysine modification. Cysteine 427 is a catalytic residue. The 166-residue stretch at 647 to 812 (NSDSQSHSCI…IRVGEEIIPN (166 aa)) folds into the MOSC domain.

This sequence belongs to the class-V pyridoxal-phosphate-dependent aminotransferase family. MOCOS subfamily. Requires pyridoxal 5'-phosphate as cofactor. Ubiquitously expressed.

It carries out the reaction Mo-molybdopterin + L-cysteine + AH2 = thio-Mo-molybdopterin + L-alanine + A + H2O. It functions in the pathway cofactor biosynthesis; molybdopterin biosynthesis. Its function is as follows. Sulfurates the molybdenum cofactor. Sulfation of molybdenum is essential for xanthine dehydrogenase (XDH) and aldehyde oxidase (ADO) enzymes in which molybdenum cofactor is liganded by 1 oxygen and 1 sulfur atom in active form. The polypeptide is Molybdenum cofactor sulfurase (FLACCA) (Solanum lycopersicum (Tomato)).